The sequence spans 423 residues: Serine--tRNA ligase (423 aa).

230-232 (TAE) provides a ligand contact to L-serine. Residue 261-263 (RAE) participates in ATP binding. Glu-284 contacts L-serine. Position 348 to 351 (348 to 351 (EISS)) interacts with ATP. An L-serine-binding site is contributed by Ser-384.

This sequence belongs to the class-II aminoacyl-tRNA synthetase family. Type-1 seryl-tRNA synthetase subfamily. As to quaternary structure, homodimer. The tRNA molecule binds across the dimer.

It is found in the cytoplasm. It catalyses the reaction tRNA(Ser) + L-serine + ATP = L-seryl-tRNA(Ser) + AMP + diphosphate + H(+). The catalysed reaction is tRNA(Sec) + L-serine + ATP = L-seryl-tRNA(Sec) + AMP + diphosphate + H(+). The protein operates within aminoacyl-tRNA biosynthesis; selenocysteinyl-tRNA(Sec) biosynthesis; L-seryl-tRNA(Sec) from L-serine and tRNA(Sec): step 1/1. Functionally, catalyzes the attachment of serine to tRNA(Ser). Is also able to aminoacylate tRNA(Sec) with serine, to form the misacylated tRNA L-seryl-tRNA(Sec), which will be further converted into selenocysteinyl-tRNA(Sec). In Acetivibrio thermocellus (strain ATCC 27405 / DSM 1237 / JCM 9322 / NBRC 103400 / NCIMB 10682 / NRRL B-4536 / VPI 7372) (Clostridium thermocellum), this protein is Serine--tRNA ligase.